The primary structure comprises 381 residues: O-phospho-L-seryl-tRNA:Cys-tRNA synthase (381 aa).

Residues 86–87, Asn192, and 215–217 contribute to the pyridoxal 5'-phosphate site; these read AR and SGH. Position 218 is an N6-(pyridoxal phosphate)lysine (Lys218).

It belongs to the SepCysS family. As to quaternary structure, homodimer. Interacts with SepRS. The cofactor is pyridoxal 5'-phosphate.

It catalyses the reaction O-phospho-L-seryl-tRNA(Cys) + hydrogen sulfide + H(+) = L-cysteinyl-tRNA(Cys) + phosphate. Functionally, converts O-phospho-L-seryl-tRNA(Cys) (Sep-tRNA(Cys)) to L-cysteinyl-tRNA(Cys) (Cys-tRNA(Cys)). The chain is O-phospho-L-seryl-tRNA:Cys-tRNA synthase from Methanococcus vannielii (strain ATCC 35089 / DSM 1224 / JCM 13029 / OCM 148 / SB).